A 101-amino-acid chain; its full sequence is Movement protein (101 aa).

Residues E30–L50 traverse the membrane as a helical segment. The interval V75–G101 is disordered.

Belongs to the mastrevirus movement protein family. Interacts with the capsid protein (CP). Part of a MP-CP-viral DNA complex.

The protein resides in the host membrane. Functionally, involved in the viral transport within, and between cells. This chain is Movement protein, found in Maize streak virus genotype A (isolate South Africa) (MSV).